We begin with the raw amino-acid sequence, 348 residues long: MLYSLLRPLVFALEPETAHGIAFNAMETAHRLGLYRARPAPCRSRSIMGLTFPNPVGLAAGLDKNGEHIDALAALGFGFIEIGTVTPRPQPGNPKPRLFRLPQANSIINRMGFNNNGIEGLVANVKAMDYKGILGINIGKNFDTPVEKAVDDYLICLRKAYRYASYITVNISSPNTPNLRQLQQATELDSLLGTLKLNQQRLADEHGKYTPLLVKIAPDLELPEIDSIAALLMKHRVDGVIATNTTLSRAGVETLPHAREAGGLSGAPLAKRATSVVARLHHALQGALPIIGVGGIMDAAGATEKIAAGASLIQVYSGLVYRGPHLVGEIAQVLCNANGGGLDGASST.

FMN is bound by residues Ala-60–Lys-64 and Thr-84. Lys-64 is a binding site for substrate. Residue Asn-109–Phe-113 participates in substrate binding. Residues Asn-137 and Asn-170 each contribute to the FMN site. Asn-170 is a binding site for substrate. Catalysis depends on Ser-173, which acts as the Nucleophile. Residue Asn-175 participates in substrate binding. FMN contacts are provided by Lys-215 and Thr-243. Asn-244–Thr-245 provides a ligand contact to substrate. FMN is bound by residues Gly-266, Gly-295, and Tyr-316–Ser-317.

Belongs to the dihydroorotate dehydrogenase family. Type 2 subfamily. Monomer. It depends on FMN as a cofactor.

It localises to the cell membrane. It catalyses the reaction (S)-dihydroorotate + a quinone = orotate + a quinol. It participates in pyrimidine metabolism; UMP biosynthesis via de novo pathway; orotate from (S)-dihydroorotate (quinone route): step 1/1. In terms of biological role, catalyzes the conversion of dihydroorotate to orotate with quinone as electron acceptor. This chain is Dihydroorotate dehydrogenase (quinone), found in Nitrosospira multiformis (strain ATCC 25196 / NCIMB 11849 / C 71).